We begin with the raw amino-acid sequence, 386 residues long: Zinc transporter 7-A (386 aa).

Residues 1–37 (MLPLSIKDDEYKPPKFNLARKVSGWIRSIFSDSTSRN) lie on the Cytoplasmic side of the membrane. A helical membrane pass occupies residues 38 to 58 (LFCFLCLNLSFAFVELFYGIW). The Lumenal portion of the chain corresponds to 59-67 (SNSLGLISD). Residues 68–88 (SFHMFFDCTALLAGLAASVIS) traverse the membrane as a helical segment. Topologically, residues 89–102 (RWKTNEAFSYGYVR) are cytoplasmic. The chain crosses the membrane as a helical span at residues 103-123 (AEVLAGFVNGLFLIFTAFFIF). Topologically, residues 124 to 140 (SEGVERALDTPEVHHER) are lumenal. Residues 141-161 (LLPVSIMGLLVNIIGIFVFQH) form a helical membrane-spanning segment. The his-rich loop stretch occupies residues 161-222 (HGGGHGHSHE…GHSHDHSPKH (62 aa)). The Cytoplasmic segment spans residues 162–246 (GGGHGHSHES…KGSSKQILEG (85 aa)). A disordered region spans residues 167 to 239 (HSHESGHGHS…DEPPEEHKGS (73 aa)). The segment covering 228-238 (CHDEPPEEHKG) has biased composition (basic and acidic residues). A helical membrane pass occupies residues 247–267 (VFLHIVADTLGSVGVIFSTIL). At 268–272 (MQRYG) the chain is on the lumenal side. A helical membrane pass occupies residues 273–293 (LMIADPICSMLIALLIFVSVI). At 294–386 (PLLKQSIGIL…LYVQIDFAAI (93 aa)) the chain is on the cytoplasmic side.

It belongs to the cation diffusion facilitator (CDF) transporter (TC 2.A.4) family. SLC30A subfamily. Homooligomer.

The protein localises to the golgi apparatus membrane. Its subcellular location is the cytoplasmic vesicle. It is found in the golgi apparatus. The protein resides in the trans-Golgi network. It localises to the sarcoplasmic reticulum. The protein localises to the mitochondrion. It catalyses the reaction Zn(2+)(in) = Zn(2+)(out). In terms of biological role, zinc ion transporter mediating zinc entry from the cytosol into the lumen of organelles along the secretory pathway. By contributing to zinc ion homeostasis within the early secretory pathway, regulates the activation and folding of enzymes like alkaline phosphatases. The protein is Zinc transporter 7-A (slc30a7-a) of Xenopus laevis (African clawed frog).